The primary structure comprises 88 residues: MNLGPTEILLILVIVVLLFGAKKLPDAARSLGRSMRIFKSEVKEMSNDDQRYEEQQQQRQIAAQAQQQVVNPVEIPQPQPTDIQRPQQ.

Residues 1-21 (MNLGPTEILLILVIVVLLFGA) form a helical membrane-spanning segment. Residues 46–56 (SNDDQRYEEQQ) are compositionally biased toward basic and acidic residues. Residues 46-88 (SNDDQRYEEQQQQRQIAAQAQQQVVNPVEIPQPQPTDIQRPQQ) form a disordered region. The span at 57 to 68 (QQRQIAAQAQQQ) shows a compositional bias: low complexity.

This sequence belongs to the TatA/E family. The Tat system comprises two distinct complexes: a TatABC complex, containing multiple copies of TatA, TatB and TatC subunits, and a separate TatA complex, containing only TatA subunits. Substrates initially bind to the TatABC complex, which probably triggers association of the separate TatA complex to form the active translocon.

It is found in the cell membrane. In terms of biological role, part of the twin-arginine translocation (Tat) system that transports large folded proteins containing a characteristic twin-arginine motif in their signal peptide across membranes. TatA could form the protein-conducting channel of the Tat system. The sequence is that of Sec-independent protein translocase protein TatA from Corynebacterium diphtheriae (strain ATCC 700971 / NCTC 13129 / Biotype gravis).